The chain runs to 432 residues: MAERTMAMPTQIPADGDTQKENNIRCLTTIGHFGFECLPNQLVSRSIRQGFTFNILCVGETGIGKSTLIDTLFNTNLKDNKSSHFYSNVGLQIQTYELQESNVQLKLTVVETVGYGDQIDKEASYQPIVDYIDAQFEAYLQEELKIKRSLFEYHDSRVHVCLYFISPTGHSLKSLDLLTMKNLDSKVNIIPLIAKADTISKNDLQTFKNKIMSELISNGIQIYQLPTDEETAAQANSSVSGLLPFAVVGSTDEVKVGKRMVRGRHYPWGVLQVENENHCDFVKLRDMLLCTNMENLKEKTHTQHYECYRYQKLQKMGFTDVGPNNQPVSFQEIFEAKRQEFYDQCQREEEELKQRFMQRVKEKEATFKEAEKELQDKFEHLKMIQQEEIRKLEEEKKQLEGEIIDFYKMKAASEALQTQLSTDTKKDKHRKK.

The Septin-type G domain maps to 49-315 (QGFTFNILCV…ECYRYQKLQK (267 aa)). Residues 59–66 (GETGIGKS) are G1 motif. GTP contacts are provided by residues 59–66 (GETGIGKS), glycine 114, 195–203 (KADTISKND), glycine 249, and arginine 264. The segment at 111–114 (ETVG) is G3 motif. The G4 motif stretch occupies residues 194–197 (AKAD). The stretch at 332-412 (EIFEAKRQEF…IIDFYKMKAA (81 aa)) forms a coiled coil. A required for interaction with SEPTIN4. Required for migration of cortical neurons during corticogenesis region spans residues 369–432 (EAEKELQDKF…DTKKDKHRKK (64 aa)).

This sequence belongs to the TRAFAC class TrmE-Era-EngA-EngB-Septin-like GTPase superfamily. Septin GTPase family. As to quaternary structure, septins polymerize into heterooligomeric protein complexes that form filaments, and can associate with cellular membranes, actin filaments and microtubules. GTPase activity is required for filament formation. Interacts with ACTN4. Interacts with SEPTIN9. Interacts (via C-terminus) with SEPTIN4. Testis-specific (at protein level).

Its subcellular location is the cytoplasm. The protein localises to the cytoskeleton. It localises to the cell projection. The protein resides in the axon. It is found in the dendrite. Its subcellular location is the perikaryon. The protein localises to the perinuclear region. It localises to the cytoplasmic vesicle. The protein resides in the secretory vesicle. It is found in the acrosome. Its function is as follows. Filament-forming cytoskeletal GTPase. Involved in the migration of cortical neurons and the formation of neuron leading processes during embryonic development. Plays a role in sperm head formation during spermiogenesis, potentially via facilitating localization of ACTN4 to cell filaments. The protein is Septin-14 of Homo sapiens (Human).